The following is a 324-amino-acid chain: Elongation factor P--(R)-beta-lysine ligase (324 aa).

75–77 provides a ligand contact to substrate; the sequence is SPE. Residues 99–101 and Asn-108 contribute to the ATP site; that span reads RNK. Tyr-117 is a substrate binding site. 243 to 244 serves as a coordination point for ATP; it reads EL. Glu-250 lines the substrate pocket. Gly-299 is an ATP binding site.

The protein belongs to the class-II aminoacyl-tRNA synthetase family. EpmA subfamily. In terms of assembly, homodimer.

The enzyme catalyses D-beta-lysine + L-lysyl-[protein] + ATP = N(6)-((3R)-3,6-diaminohexanoyl)-L-lysyl-[protein] + AMP + diphosphate + H(+). In terms of biological role, with EpmB is involved in the beta-lysylation step of the post-translational modification of translation elongation factor P (EF-P). Catalyzes the ATP-dependent activation of (R)-beta-lysine produced by EpmB, forming a lysyl-adenylate, from which the beta-lysyl moiety is then transferred to the epsilon-amino group of a conserved specific lysine residue in EF-P. The polypeptide is Elongation factor P--(R)-beta-lysine ligase (Buchnera aphidicola subsp. Acyrthosiphon pisum (strain 5A)).